A 396-amino-acid chain; its full sequence is B2 bradykinin receptor (396 aa).

Residues 1–65 (MDTRSSLCPK…EWWSWLNAIQ (65 aa)) are Extracellular-facing. N-linked (GlcNAc...) asparagine glycosylation is found at asparagine 33 and asparagine 44. A helical membrane pass occupies residues 66 to 89 (APFLWVLFLLAALENIFVLSVFCL). Residues 90-98 (HKTNCTVAE) lie on the Cytoplasmic side of the membrane. A helical transmembrane segment spans residues 99–123 (IYLGNLAAADLILACGLPFWAITIA). The Extracellular segment spans residues 124 to 136 (NNFDWLFGEVLCR). Cysteine 135 and cysteine 216 form a disulfide bridge. Residues 137 to 158 (VVNTMIYMNLYSSICFLMLVSI) form a helical membrane-spanning segment. Residues 159–180 (DRYLALVKTMSMGRMRGVRWAK) are Cytoplasmic-facing. Tyrosine 161 carries the phosphotyrosine modification. The chain crosses the membrane as a helical span at residues 181–203 (LYSLVIWSCTLLLSSPMLVFRTM). The Extracellular segment spans residues 204 to 226 (KDYREEGHNVTACVIVYPSRSWE). Residue asparagine 212 is glycosylated (N-linked (GlcNAc...) asparagine). A helical membrane pass occupies residues 227 to 253 (VFTNMLLNLVGFLLPLSIITFCTVRIM). The Cytoplasmic segment spans residues 254–272 (QVLRNNEMKKFKEVQTEKK). Residues 273–297 (ATVLVLAVLGLFVLCWFPFQISTFL) form a helical membrane-spanning segment. Over 298-316 (DTLLRLGVLSGCWNERAVD) the chain is Extracellular. Residues 317 to 340 (IVTQISSYVAYSNSCLNPLVYVIV) form a helical membrane-spanning segment. The Cytoplasmic segment spans residues 341 to 396 (GKRFRKKSREVYQAICRKGGCMGESVQMENSMGTLRTSISVDRQIHKLQDWAGNKQ). A Phosphotyrosine modification is found at tyrosine 352. Cysteine 356 is lipidated: S-palmitoyl cysteine. A phosphoserine mark is found at serine 365 and serine 371. A Phosphothreonine modification is found at threonine 374. A phosphoserine; by GRK6 mark is found at serine 378 and serine 380.

It belongs to the G-protein coupled receptor 1 family. Bradykinin receptor subfamily. BDKRB2 sub-subfamily. In terms of assembly, forms a complex with PECAM1 and GNAQ. Interacts with PECAM1. In terms of processing, diphosphorylation at Ser-365 and Ser-371, at Ser-378 and Ser-380, and at Thr-374 and Ser-380 seem to be correlated pairwise. Palmitoylation at Cys-356 and phosphorylation at Tyr-352 seem to be mutually exclusive. As to expression, uterus, vas deferens, kidney, ileum, heart, testis, lung and brain.

The protein localises to the cell membrane. Functionally, receptor for bradykinin. It is associated with G proteins that activate a phosphatidylinositol-calcium second messenger system. This is B2 bradykinin receptor (Bdkrb2) from Rattus norvegicus (Rat).